A 132-amino-acid polypeptide reads, in one-letter code: Vesicle transport protein GOT1A (132 aa).

Over 1-9 the chain is Cytoplasmic; it reads MISITEWQK. The helical transmembrane segment at 10–30 threads the bilayer; the sequence is IGVGITGFGIFFILFGTLLYF. A topological domain (lumenal) is located at residue D31. Residues 32-52 form a helical membrane-spanning segment; it reads SVLLAFGNLLFLTGLSLIIGL. Residues 53–68 are Cytoplasmic-facing; that stretch reads RKTFWFFFQRHKLKGT. A helical membrane pass occupies residues 69-89; it reads SFLLGGVVIVLLRWPLLGMFL. Residues 90 to 100 lie on the Lumenal side of the membrane; the sequence is ETYGFFSLFKG. A helical transmembrane segment spans residues 101–121; sequence FFPVAFGFLGNVCNIPFLGAL. Residues 122–132 lie on the Cytoplasmic side of the membrane; sequence FRRLQGTSSMV.

Belongs to the GOT1 family.

The protein localises to the golgi apparatus membrane. Functionally, may be involved in fusion of ER-derived transport vesicles with the Golgi complex. This Homo sapiens (Human) protein is Vesicle transport protein GOT1A.